A 217-amino-acid polypeptide reads, in one-letter code: Large ribosomal subunit protein eL6 (217 aa).

This sequence belongs to the eukaryotic ribosomal protein eL6 family. Component of the large ribosomal subunit. May bind IPO9 with low affinity.

The protein resides in the cytoplasm. It is found in the cytosol. It localises to the rough endoplasmic reticulum. In terms of biological role, component of the large ribosomal subunit. The polypeptide is Large ribosomal subunit protein eL6 (rpl-6) (Caenorhabditis elegans).